We begin with the raw amino-acid sequence, 105 residues long: Nucleoid-associated protein RPE_4812 (105 aa).

Belongs to the YbaB/EbfC family. In terms of assembly, homodimer.

The protein resides in the cytoplasm. The protein localises to the nucleoid. Functionally, binds to DNA and alters its conformation. May be involved in regulation of gene expression, nucleoid organization and DNA protection. This chain is Nucleoid-associated protein RPE_4812, found in Rhodopseudomonas palustris (strain BisA53).